Reading from the N-terminus, the 63-residue chain is MVFPLVCSTCGRDLSEARYRLLVEQMELKKVVITYSRKCCRLKLSTQIEPYRNLTVQPSLDIN.

Belongs to the poxviridae DNA-directed RNA polymerase 7 kDa subunit family. As to quaternary structure, the DNA-dependent RNA polymerase used for intermediate and late genes expression consists of eight subunits 147 kDa, 133 kDa, 35 kDa, 30 kDa, 22 kDa, 19 kDa, 18 kDa and 7 kDa totalling more than 500 kDa in mass. The same holoenzyme, with the addition of the transcription-specificity factor RAP94, is used for early gene expression.

The protein localises to the virion. The catalysed reaction is RNA(n) + a ribonucleoside 5'-triphosphate = RNA(n+1) + diphosphate. Part of the DNA-dependent RNA polymerase which catalyzes the transcription of viral DNA into RNA using the four ribonucleoside triphosphates as substrates. Responsible for the transcription of early, intermediate and late genes. DNA-dependent RNA polymerase associates with the early transcription factor (ETF) thereby allowing the early genes transcription. Late transcription, and probably also intermediate transcription, require newly synthesized RNA polymerase. This chain is DNA-directed RNA polymerase 7 kDa subunit (RPO7), found in Fowlpox virus (strain NVSL) (FPV).